Here is a 278-residue protein sequence, read N- to C-terminus: Digeranylgeranylglyceryl phosphate synthase (278 aa).

7 helical membrane-spanning segments follow: residues 12–32 (LKNCLTAGFGALISGLIASNF), 34–54 (FGALFPLILAFLVVFFICGFG), 92–112 (IMIFGLIISLFNIYCFLMAVL), 129–149 (IIGNMLVAYLTGSVFIFGGIA), 199–219 (IYISLGLLLIAIGLSFLPYLT), 221–241 (IFGIYYLLMILICNLMFLAGF), and 257–277 (SKNIKLITNFVLIAFIIGSIF).

Belongs to the UbiA prenyltransferase family. DGGGP synthase subfamily. Mg(2+) serves as cofactor.

It is found in the cell membrane. The enzyme catalyses sn-3-O-(geranylgeranyl)glycerol 1-phosphate + (2E,6E,10E)-geranylgeranyl diphosphate = 2,3-bis-O-(geranylgeranyl)-sn-glycerol 1-phosphate + diphosphate. It participates in membrane lipid metabolism; glycerophospholipid metabolism. In terms of biological role, prenyltransferase that catalyzes the transfer of the geranylgeranyl moiety of geranylgeranyl diphosphate (GGPP) to the C2 hydroxyl of (S)-3-O-geranylgeranylglyceryl phosphate (GGGP). This reaction is the second ether-bond-formation step in the biosynthesis of archaeal membrane lipids. This chain is Digeranylgeranylglyceryl phosphate synthase, found in Methanococcus vannielii (strain ATCC 35089 / DSM 1224 / JCM 13029 / OCM 148 / SB).